A 661-amino-acid chain; its full sequence is Arginine--tRNA ligase, cytoplasmic (661 aa).

The interval 1–72 is could be involved in the assembly of the multisynthetase complex; the sequence is MEARVAEAAA…QEEQSKTVKS (72 aa). L-arginine-binding positions include 201 to 203, His212, Tyr385, Asp389, and Gln413; that span reads SPN. Positions 202–213 match the 'HIGH' region motif; sequence PNIAKEMHVGHL. The interval 530–544 is interaction with tRNA; the sequence is NTAAYLLYAFTRIRA.

This sequence belongs to the class-I aminoacyl-tRNA synthetase family. In terms of assembly, monomer; also part of a multisubunit complex that groups tRNA ligases for Arg, Asp, Glu, Gln, Ile, Leu, Lys, Met and Pro.

The protein resides in the cytoplasm. Its subcellular location is the cytosol. The catalysed reaction is tRNA(Arg) + L-arginine + ATP = L-arginyl-tRNA(Arg) + AMP + diphosphate. Forms part of a macromolecular complex that catalyzes the attachment of specific amino acids to cognate tRNAs during protein synthesis. This chain is Arginine--tRNA ligase, cytoplasmic (RARS1), found in Gallus gallus (Chicken).